The chain runs to 459 residues: Putrescine aminotransferase (459 aa).

Pyridoxal 5'-phosphate contacts are provided by residues 150-151 (GT) and Q274. K300 carries the post-translational modification N6-(pyridoxal phosphate)lysine. Position 332 (T332) interacts with pyridoxal 5'-phosphate.

This sequence belongs to the class-III pyridoxal-phosphate-dependent aminotransferase family. Putrescine aminotransferase subfamily. It depends on pyridoxal 5'-phosphate as a cofactor.

It carries out the reaction an alkane-alpha,omega-diamine + 2-oxoglutarate = an omega-aminoaldehyde + L-glutamate. It catalyses the reaction putrescine + 2-oxoglutarate = 1-pyrroline + L-glutamate + H2O. The catalysed reaction is cadaverine + 2-oxoglutarate = 5-aminopentanal + L-glutamate. Its pathway is amine and polyamine degradation; putrescine degradation; 4-aminobutanal from putrescine (transaminase route): step 1/1. Catalyzes the aminotransferase reaction from putrescine to 2-oxoglutarate, leading to glutamate and 4-aminobutanal, which spontaneously cyclizes to form 1-pyrroline. This is the first step in one of two pathways for putrescine degradation, where putrescine is converted into 4-aminobutanoate (gamma-aminobutyrate or GABA) via 4-aminobutanal. Also functions as a cadaverine transaminase in a a L-lysine degradation pathway to succinate that proceeds via cadaverine, glutarate and L-2-hydroxyglutarate. In Salmonella paratyphi A (strain ATCC 9150 / SARB42), this protein is Putrescine aminotransferase.